We begin with the raw amino-acid sequence, 207 residues long: Claudin-11 (207 aa).

Methionine 1 is a topological domain (cytoplasmic). Residues valine 2–isoleucine 22 traverse the membrane as a helical segment. The Extracellular segment spans residues valine 23 to arginine 82. The helical transmembrane segment at alanine 83 to leucine 103 threads the bilayer. The Cytoplasmic segment spans residues proline 104–leucine 122. The helical transmembrane segment at alanine 123–valine 143 threads the bilayer. Over cysteine 144–serine 157 the chain is Extracellular. The chain crosses the membrane as a helical span at residues leucine 158–cysteine 178. The Cytoplasmic portion of the chain corresponds to serine 179–valine 207. A phosphoserine mark is found at serine 193, serine 194, serine 197, and serine 198.

It belongs to the claudin family. In terms of assembly, interacts with tetraspanin-3/TSPAN3. Interacts with OCLN.

It is found in the cell junction. The protein resides in the tight junction. The protein localises to the cell membrane. Functionally, plays a major role in tight junction-specific obliteration of the intercellular space, through calcium-independent cell-adhesion activity. The chain is Claudin-11 (Cldn11) from Rattus norvegicus (Rat).